A 222-amino-acid chain; its full sequence is uncharacterized protein (222 aa).

The HTH gntR-type domain occupies 8 to 77 (AKKNQIIYRY…NTPGYFVCKD (70 aa)).

This is an uncharacterized protein from Mycoplasma genitalium (strain ATCC 33530 / DSM 19775 / NCTC 10195 / G37) (Mycoplasmoides genitalium).